Here is a 250-residue protein sequence, read N- to C-terminus: 3-deoxy-manno-octulosonate cytidylyltransferase (250 aa).

It belongs to the KdsB family.

It localises to the cytoplasm. It carries out the reaction 3-deoxy-alpha-D-manno-oct-2-ulosonate + CTP = CMP-3-deoxy-beta-D-manno-octulosonate + diphosphate. The protein operates within nucleotide-sugar biosynthesis; CMP-3-deoxy-D-manno-octulosonate biosynthesis; CMP-3-deoxy-D-manno-octulosonate from 3-deoxy-D-manno-octulosonate and CTP: step 1/1. It participates in bacterial outer membrane biogenesis; lipopolysaccharide biosynthesis. Functionally, activates KDO (a required 8-carbon sugar) for incorporation into bacterial lipopolysaccharide in Gram-negative bacteria. The sequence is that of 3-deoxy-manno-octulosonate cytidylyltransferase from Legionella pneumophila (strain Corby).